The primary structure comprises 515 residues: Proline--tRNA ligase (515 aa).

The protein belongs to the class-II aminoacyl-tRNA synthetase family. ProS type 3 subfamily. Homodimer.

Its subcellular location is the cytoplasm. The catalysed reaction is tRNA(Pro) + L-proline + ATP = L-prolyl-tRNA(Pro) + AMP + diphosphate. Catalyzes the attachment of proline to tRNA(Pro) in a two-step reaction: proline is first activated by ATP to form Pro-AMP and then transferred to the acceptor end of tRNA(Pro). This is Proline--tRNA ligase from Novosphingobium aromaticivorans (strain ATCC 700278 / DSM 12444 / CCUG 56034 / CIP 105152 / NBRC 16084 / F199).